The primary structure comprises 284 residues: Pantothenate synthetase (284 aa).

30 to 37 contacts ATP; sequence MGALHEGH. The Proton donor role is filled by histidine 37. Residue glutamine 61 coordinates (R)-pantoate. Position 61 (glutamine 61) interacts with beta-alanine. ATP is bound at residue 147 to 150; sequence GEKD. Glutamine 153 contributes to the (R)-pantoate binding site. ATP-binding positions include valine 176 and 184-187; that span reads TSSR.

The protein belongs to the pantothenate synthetase family. Homodimer.

It is found in the cytoplasm. It catalyses the reaction (R)-pantoate + beta-alanine + ATP = (R)-pantothenate + AMP + diphosphate + H(+). It participates in cofactor biosynthesis; (R)-pantothenate biosynthesis; (R)-pantothenate from (R)-pantoate and beta-alanine: step 1/1. In terms of biological role, catalyzes the condensation of pantoate with beta-alanine in an ATP-dependent reaction via a pantoyl-adenylate intermediate. This is Pantothenate synthetase from Chlorobaculum tepidum (strain ATCC 49652 / DSM 12025 / NBRC 103806 / TLS) (Chlorobium tepidum).